A 326-amino-acid chain; its full sequence is Undecaprenyl-phosphate 4-deoxy-4-formamido-L-arabinose transferase (326 aa).

Helical transmembrane passes span 235–255 (MLSV…LLLI) and 270–290 (VFML…GMGL).

Belongs to the glycosyltransferase 2 family.

It localises to the cell inner membrane. It carries out the reaction UDP-4-deoxy-4-formamido-beta-L-arabinose + di-trans,octa-cis-undecaprenyl phosphate = 4-deoxy-4-formamido-alpha-L-arabinopyranosyl di-trans,octa-cis-undecaprenyl phosphate + UDP. Its pathway is glycolipid biosynthesis; 4-amino-4-deoxy-alpha-L-arabinose undecaprenyl phosphate biosynthesis; 4-amino-4-deoxy-alpha-L-arabinose undecaprenyl phosphate from UDP-4-deoxy-4-formamido-beta-L-arabinose and undecaprenyl phosphate: step 1/2. It functions in the pathway bacterial outer membrane biogenesis; lipopolysaccharide biosynthesis. Its function is as follows. Catalyzes the transfer of 4-deoxy-4-formamido-L-arabinose from UDP to undecaprenyl phosphate. The modified arabinose is attached to lipid A and is required for resistance to polymyxin and cationic antimicrobial peptides. The chain is Undecaprenyl-phosphate 4-deoxy-4-formamido-L-arabinose transferase from Sodalis glossinidius (strain morsitans).